Consider the following 32-residue polypeptide: Basic phospholipase A2 (32 aa).

Ca(2+)-binding residues include Tyr26, Gly28, and Gly30.

It belongs to the phospholipase A2 family. Group II subfamily. Requires Ca(2+) as cofactor. Expressed by the venom gland.

It localises to the secreted. The enzyme catalyses a 1,2-diacyl-sn-glycero-3-phosphocholine + H2O = a 1-acyl-sn-glycero-3-phosphocholine + a fatty acid + H(+). Its function is as follows. Snake venom phospholipase A2 (PLA2) that inhibits neuromuscular transmission by blocking acetylcholine release from the nerve termini. PLA2 catalyzes the calcium-dependent hydrolysis of the 2-acyl groups in 3-sn-phosphoglycerides. This chain is Basic phospholipase A2, found in Gloydius halys (Chinese water mocassin).